The sequence spans 250 residues: Pyrroloquinoline-quinone synthase (250 aa).

The protein belongs to the PqqC family.

The catalysed reaction is 6-(2-amino-2-carboxyethyl)-7,8-dioxo-1,2,3,4,7,8-hexahydroquinoline-2,4-dicarboxylate + 3 O2 = pyrroloquinoline quinone + 2 H2O2 + 2 H2O + H(+). It functions in the pathway cofactor biosynthesis; pyrroloquinoline quinone biosynthesis. In terms of biological role, ring cyclization and eight-electron oxidation of 3a-(2-amino-2-carboxyethyl)-4,5-dioxo-4,5,6,7,8,9-hexahydroquinoline-7,9-dicarboxylic-acid to PQQ. The polypeptide is Pyrroloquinoline-quinone synthase (Pseudomonas aeruginosa (strain LESB58)).